We begin with the raw amino-acid sequence, 432 residues long: MRKLRLVRIPRHLIIAASSWLSKIIIAGVQLVSVKFLLEILGEESYAVFTLLTGLLVWFSIADIGIGSSLQNYISELKADRKSYDAYIKAAVHILFASLIILSSTLFFLSDKLSSLYLTSFSDELKNNSGSYFFIASILFIFIGVGSVVYKILFAELLGWKANIINALSYLLGFLDVVAIHYLMPDSSITFALVALYAPVAILPIIYISFRYIYVLKAKVNFNTYKLLLSRSSGFLIFSSLSIIVLQTDYIVMSQKLSAADIIKYTVTMKIFGLMFFIYTAVLQALWPVCAELRVKMQWRKLHRIIFLNIIGGVFFIGLGTLFIYVLKDYIYSIIANGIDYNISGVVFVLLAVYFSIRVWCDTFAMLLQSMNQLKILWLIVPCQALIGGVTQWYFAEHYGIVGILYGLILSFSLTVFWGLPVYYMYKSKRLA.

Helical transmembrane passes span 14–34, 47–67, 90–110, 134–154, 164–184, 189–209, 234–254, 271–291, 305–325, 334–354, 376–396, and 400–420; these read IIAASSWLSKIIIAGVQLVSV, AVFTLLTGLLVWFSIADIGIG, AAVHILFASLIILSSTLFFLS, FIASILFIFIGVGSVVYKILF, IINALSYLLGFLDVVAIHYLM, ITFALVALYAPVAILPIIYIS, GFLIFSSLSIIVLQTDYIVMS, IFGLMFFIYTAVLQALWPVCA, IIFLNIIGGVFFIGLGTLFIY, IIANGIDYNISGVVFVLLAVY, ILWLIVPCQALIGGVTQWYFA, and GIVGILYGLILSFSLTVFWGL.

It is found in the cell inner membrane. Its pathway is bacterial outer membrane biogenesis; LPS O-antigen biosynthesis. Functionally, may be involved in the translocation process of the nascent O-polysaccharide molecules and/or its ligation to lipid A core units. In Salmonella typhi, this protein is Putative O-antigen transporter (rfbX).